A 200-amino-acid chain; its full sequence is uncharacterized protein (200 aa).

Residues 1–24 (MAIDKLPLLLFLSILLCLNRPVLS) form the signal peptide. N-linked (GlcNAc...) asparagine glycosylation is found at Asn-44, Asn-72, Asn-99, Asn-124, and Asn-135. Ser-174 carries the GPI-anchor amidated serine lipid modification. Positions 175–200 (NGFTFGIGLVSYLVIFMYSSFCFFLF) are cleaved as a propeptide — removed in mature form.

This sequence belongs to the UPF0277 family.

The protein localises to the cell membrane. This is an uncharacterized protein from Arabidopsis thaliana (Mouse-ear cress).